The sequence spans 370 residues: Aldo-keto reductase NECHADRAFT_45914 (370 aa).

Asp78 provides a ligand contact to NADP(+). Tyr83 (proton donor) is an active-site residue. His174 is a binding site for substrate. NADP(+) contacts are provided by residues 204–205 (SS), Gln230, 259–269 (APLASGRLARR), and 333–341 (STVQRIEEA).

Belongs to the aldo/keto reductase family.

The protein operates within secondary metabolite biosynthesis. In terms of biological role, aldo-keto reductase; part of the gene cluster that mediates the biosynthesis of sansalvamide, a cyclic pentadepsipeptide that shows promising results as potential anti-cancer drug. The nonribosmal peptide synthetase NRPS30 produces sansalvamide by incorporating successively one phenylalanine, one leucine, one alpha-hydroxyisocaproic acid (HICA), one valine and one leucine before sansalvamide is released from by cyclization by the terminal C domain of NRPS30. The HICA residue is probably provided by reduction of alpha-ketoisocaproate by the cluster-specific aldo-keto reductase (NECHADRAFT_45914). This is Aldo-keto reductase NECHADRAFT_45914 from Fusarium vanettenii (strain ATCC MYA-4622 / CBS 123669 / FGSC 9596 / NRRL 45880 / 77-13-4) (Fusarium solani subsp. pisi).